Consider the following 350-residue polypeptide: Phosphotriesterase-related protein (350 aa).

Positions 22, 24, 169, 201, 230, and 298 each coordinate a divalent metal cation.

It belongs to the metallo-dependent hydrolases superfamily. Phosphotriesterase family. A divalent metal cation is required as a cofactor.

The chain is Phosphotriesterase-related protein from Drosophila ananassae (Fruit fly).